The chain runs to 142 residues: Type II secretion system core protein G (142 aa).

A propeptide spans 1-8 (MRRQSQRG) (leader sequence). Position 9 is an N-methylphenylalanine (Phe9). The helical transmembrane segment at 9–29 (FTLLEIMVVIVIMGILASLVV) threads the bilayer. Residues 122 to 142 (SGQDGVPGTDDDIGNWTLSKK) are disordered.

The protein belongs to the GSP G family. In terms of assembly, type II secretion system is composed of four main components: the outer membrane complex, the inner membrane complex, the cytoplasmic secretion ATPase and the periplasm-spanning pseudopilus. Forms homomultimers. Cleaved by the prepilin peptidase. In terms of processing, methylated by prepilin peptidase at the amino group of the N-terminal phenylalanine once the leader sequence is cleaved.

It is found in the cell inner membrane. In terms of biological role, core component of the type II secretion system required for the energy-dependent secretion of extracellular factors such as proteases and toxins from the periplasm. Pseudopilin (pilin-like) protein that polymerizes to form the pseudopilus. Further polymerization triggers pseudopilus growth. This Klebsiella michiganensis (strain ATCC 8724 / DSM 4798 / JCM 20051 / NBRC 3318 / NRRL B-199 / KCTC 1686 / BUCSAV 143 / CCM 1901) protein is Type II secretion system core protein G.